A 917-amino-acid chain; its full sequence is Gamma-tubulin complex component 3 (917 aa).

It belongs to the TUBGCP family. As to quaternary structure, gamma-tubulin small complex (Gamma TuSC) is a heterotetrameric complex which contains two molecules of gamma-tubulin, and one molecule each of Dgrip84 and Dgrip91. The gamma-tubulin in this complex binds preferentially to GDP over GTP.

Its subcellular location is the cytoplasm. It localises to the cytoskeleton. The protein resides in the microtubule organizing center. The protein localises to the centrosome. It is found in the perinuclear region. This chain is Gamma-tubulin complex component 3, found in Drosophila melanogaster (Fruit fly).